The following is a 354-amino-acid chain: Uroporphyrinogen decarboxylase (354 aa).

Substrate is bound by residues 27–31, Asp-77, Tyr-154, Thr-209, and His-327; that span reads RQAGR.

It belongs to the uroporphyrinogen decarboxylase family. Homodimer.

The protein localises to the cytoplasm. The enzyme catalyses uroporphyrinogen III + 4 H(+) = coproporphyrinogen III + 4 CO2. Its pathway is porphyrin-containing compound metabolism; protoporphyrin-IX biosynthesis; coproporphyrinogen-III from 5-aminolevulinate: step 4/4. Catalyzes the decarboxylation of four acetate groups of uroporphyrinogen-III to yield coproporphyrinogen-III. The protein is Uroporphyrinogen decarboxylase of Serratia proteamaculans (strain 568).